A 1034-amino-acid chain; its full sequence is MIKRTSLSFACLSFFYLSTISILQANETDTLQFRRFTFSDREIQFVLDPASLITAQNIVLSNLQSNGTGACTISGNTQTQIFSNSVNTTADSGGAFDMVTTSFTASDNANLLFCNNYCTHNKGGGAIRSGGPIRFLNNQDVLFYNNISAGAKYVGTGDHNEKNRGGALYATTITLTGNRTLAFINNMSGDCGGAISADTQISITDTVKGILFENNHTLNHIPYTQAENMARGGAICSRRDLCSISNNSGPIVFNYNQGGKGGAISATRCVIDNNKERIIFSNNSSLGWSQSSSASNGGAIQTTQGFTLRNNKGSIYFDSNTATHAGGAINCGYIDIRDNGPVYFLNNSAAWGAAFNLSKPRSATNYIHTGTGDIVFNNNVVFTLDGNLLGKRKLFHINNNEITPYTLSLGAKKDTRIYFYDLFQWERVKENTSNNPPSPTSRNTITVNPETEFSGAVVFSYNQMSSDIRTLMGKEHNYIKEAPTTLKFGTLAIEDDAELEIFNIPFTQNPTSLLALGSGATLTVGKHGKLNITNLGVILPIILKEGKSPPCIRVNPQDMTQNTGTGQTPSSTSSISTPMIIFNGRLSIVDENYESVYDSMDLSRGKAEQLILSIETTNDGQLDSNWQSSLNTSLLSPPHYGYQGLWTPNWITTTYTITLNNNSSAPTSATSIAEQKKTSETFTPSNTTTASIPNIKASAGSGSGSASNSGEVTITKHTLVVNWAPVGYIVDPIRRGDLIANSLVHSGRNMTMGLRSLLPDNSWFALQGAATTLFTKQQKRLSYHGYSSASKGYTVSSQASGAHGHKFLLSFSQSSDKMKEKETNNRLSSRYYLSALCFEHPMFDRIALIGAAACNYGTHNMRSFYGTKKSSKGKFHSTTLGASLRCELRDSMPLRSIMLTPFAQALFSRTEPASIRESGDLARLFTLEQAHTAVVSPIGIKGAYSSDTWPTLSWEMELAYQPTLYWKRPLLNTLLIQNNGSWVTTNTPLAKHSFYGRGSHSLKFSHLKLFANYQAEVATSTVSHYINAGGALVF.

A signal peptide spans 1 to 25; it reads MIKRTSLSFACLSFFYLSTISILQA. Low complexity-rich tracts occupy residues 664–673 and 680–709; these read SAPTSATSIA and ETFTPSNTTTASIPNIKASAGSGSGSASNS. The segment at 664–709 is disordered; the sequence is SAPTSATSIAEQKKTSETFTPSNTTTASIPNIKASAGSGSGSASNS. Positions 755 to 1034 constitute an Autotransporter domain; it reads RSLLPDNSWF…YINAGGALVF (280 aa).

The protein belongs to the PMP outer membrane protein family.

It localises to the secreted. The protein resides in the cell wall. The protein localises to the cell outer membrane. This is Probable outer membrane protein PmpF (pmpF) from Chlamydia trachomatis serovar D (strain ATCC VR-885 / DSM 19411 / UW-3/Cx).